A 240-amino-acid polypeptide reads, in one-letter code: Protein FATTY ACID EXPORT 2, chloroplastic (240 aa).

The N-terminal 84 residues, 1–84 (MADLILSSSS…TANCVDSGVK (84 aa)), are a transit peptide targeting the chloroplast. Gly residues predominate over residues 97 to 113 (GGGIGGDKFGGGGGGGD). A disordered region spans residues 97-134 (GGGIGGDKFGGGGGGGDGNDDGGEDDKEESDGKKSTPL). The span at 114-125 (GNDDGGEDDKEE) shows a compositional bias: acidic residues. 3 consecutive transmembrane segments (helical) span residues 164–184 (SLLAGGLSAAVLLYVFSQLPT), 186–206 (PVLASTVGVVMAGALMYVMGT), and 214–234 (IFPAGVVSIMSFIMTGGYIHG).

Belongs to the TMEM14 family.

The protein localises to the plastid. It is found in the chloroplast membrane. Functionally, may be involved in free fatty acids export from the plastids. In Arabidopsis thaliana (Mouse-ear cress), this protein is Protein FATTY ACID EXPORT 2, chloroplastic.